The sequence spans 329 residues: DNA-directed RNA polymerase subunit alpha (329 aa).

Residues 1–235 (MLGSVTDFLK…EQLDAFVDLR (235 aa)) are alpha N-terminal domain (alpha-NTD). The alpha C-terminal domain (alpha-CTD) stretch occupies residues 249–329 (FDPILLRPVD…NWPPASLADN (81 aa)).

The protein belongs to the RNA polymerase alpha chain family. Homodimer. The RNAP catalytic core consists of 2 alpha, 1 beta, 1 beta' and 1 omega subunit. When a sigma factor is associated with the core the holoenzyme is formed, which can initiate transcription.

The catalysed reaction is RNA(n) + a ribonucleoside 5'-triphosphate = RNA(n+1) + diphosphate. Its function is as follows. DNA-dependent RNA polymerase catalyzes the transcription of DNA into RNA using the four ribonucleoside triphosphates as substrates. The sequence is that of DNA-directed RNA polymerase subunit alpha from Tolumonas auensis (strain DSM 9187 / NBRC 110442 / TA 4).